Here is a 96-residue protein sequence, read N- to C-terminus: UPF0235 protein YggU (96 aa).

The protein belongs to the UPF0235 family.

The sequence is that of UPF0235 protein YggU from Escherichia coli O127:H6 (strain E2348/69 / EPEC).